The sequence spans 360 residues: DNA polymerase IV (360 aa).

Residues 9 to 191 enclose the UmuC domain; the sequence is IMHLDIDAFY…LNINKIPYIG (183 aa). Mg(2+) contacts are provided by Asp13 and Asp108. Glu109 is an active-site residue.

It belongs to the DNA polymerase type-Y family. Monomer. Requires Mg(2+) as cofactor.

Its subcellular location is the cytoplasm. The enzyme catalyses DNA(n) + a 2'-deoxyribonucleoside 5'-triphosphate = DNA(n+1) + diphosphate. Functionally, poorly processive, error-prone DNA polymerase involved in untargeted mutagenesis. Copies undamaged DNA at stalled replication forks, which arise in vivo from mismatched or misaligned primer ends. These misaligned primers can be extended by PolIV. Exhibits no 3'-5' exonuclease (proofreading) activity. May be involved in translesional synthesis, in conjunction with the beta clamp from PolIII. The protein is DNA polymerase IV of Ureaplasma parvum serovar 3 (strain ATCC 27815 / 27 / NCTC 11736).